Reading from the N-terminus, the 284-residue chain is Bifunctional protein FolD (284 aa).

NADP(+)-binding positions include 165–167, Ser-190, and Val-231; that span reads GRS.

This sequence belongs to the tetrahydrofolate dehydrogenase/cyclohydrolase family. In terms of assembly, homodimer.

It carries out the reaction (6R)-5,10-methylene-5,6,7,8-tetrahydrofolate + NADP(+) = (6R)-5,10-methenyltetrahydrofolate + NADPH. The enzyme catalyses (6R)-5,10-methenyltetrahydrofolate + H2O = (6R)-10-formyltetrahydrofolate + H(+). The protein operates within one-carbon metabolism; tetrahydrofolate interconversion. Its function is as follows. Catalyzes the oxidation of 5,10-methylenetetrahydrofolate to 5,10-methenyltetrahydrofolate and then the hydrolysis of 5,10-methenyltetrahydrofolate to 10-formyltetrahydrofolate. This chain is Bifunctional protein FolD, found in Geobacillus thermodenitrificans (strain NG80-2).